Reading from the N-terminus, the 463-residue chain is Bifunctional protein HldE (463 aa).

The segment at 1 to 315 (MRKILVIGDL…LILNQTHPKI (315 aa)) is ribokinase. Residue 191–194 (NRFE) coordinates ATP. The active site involves aspartate 260. The interval 334-463 (FTNGCFDILH…IEKIKRAYND (130 aa)) is cytidylyltransferase.

It in the N-terminal section; belongs to the carbohydrate kinase PfkB family. This sequence in the C-terminal section; belongs to the cytidylyltransferase family. In terms of assembly, homodimer.

The enzyme catalyses D-glycero-beta-D-manno-heptose 7-phosphate + ATP = D-glycero-beta-D-manno-heptose 1,7-bisphosphate + ADP + H(+). It carries out the reaction D-glycero-beta-D-manno-heptose 1-phosphate + ATP + H(+) = ADP-D-glycero-beta-D-manno-heptose + diphosphate. It participates in nucleotide-sugar biosynthesis; ADP-L-glycero-beta-D-manno-heptose biosynthesis; ADP-L-glycero-beta-D-manno-heptose from D-glycero-beta-D-manno-heptose 7-phosphate: step 1/4. It functions in the pathway nucleotide-sugar biosynthesis; ADP-L-glycero-beta-D-manno-heptose biosynthesis; ADP-L-glycero-beta-D-manno-heptose from D-glycero-beta-D-manno-heptose 7-phosphate: step 3/4. Its function is as follows. Catalyzes the phosphorylation of D-glycero-D-manno-heptose 7-phosphate at the C-1 position to selectively form D-glycero-beta-D-manno-heptose-1,7-bisphosphate. Functionally, catalyzes the ADP transfer from ATP to D-glycero-beta-D-manno-heptose 1-phosphate, yielding ADP-D-glycero-beta-D-manno-heptose. The polypeptide is Bifunctional protein HldE (Helicobacter acinonychis (strain Sheeba)).